Consider the following 128-residue polypeptide: uncharacterized protein (128 aa).

The region spanning 18 to 116 (CPVETTLDII…WGEKYKDRID (99 aa)) is the HTH hxlR-type domain.

This is an uncharacterized protein from Bacillus subtilis (strain 168).